Consider the following 96-residue polypeptide: Aspartyl/glutamyl-tRNA(Asn/Gln) amidotransferase subunit C (96 aa).

Belongs to the GatC family. In terms of assembly, heterotrimer of A, B and C subunits.

It carries out the reaction L-glutamyl-tRNA(Gln) + L-glutamine + ATP + H2O = L-glutaminyl-tRNA(Gln) + L-glutamate + ADP + phosphate + H(+). It catalyses the reaction L-aspartyl-tRNA(Asn) + L-glutamine + ATP + H2O = L-asparaginyl-tRNA(Asn) + L-glutamate + ADP + phosphate + 2 H(+). Allows the formation of correctly charged Asn-tRNA(Asn) or Gln-tRNA(Gln) through the transamidation of misacylated Asp-tRNA(Asn) or Glu-tRNA(Gln) in organisms which lack either or both of asparaginyl-tRNA or glutaminyl-tRNA synthetases. The reaction takes place in the presence of glutamine and ATP through an activated phospho-Asp-tRNA(Asn) or phospho-Glu-tRNA(Gln). This chain is Aspartyl/glutamyl-tRNA(Asn/Gln) amidotransferase subunit C, found in Chloroflexus aggregans (strain MD-66 / DSM 9485).